Reading from the N-terminus, the 375-residue chain is Protein HrmA (375 aa).

Unknown. May serve a regulatory function. The sequence is that of Protein HrmA (hrmA) from Pseudomonas syringae pv. syringae.